A 1050-amino-acid chain; its full sequence is DNA ligase 4 (1050 aa).

A disordered region spans residues 1–22 (MNTNRRSRSPDEEALEEDQHQY). ATP is bound by residues glutamate 329, lysine 331, leucine 332, arginine 336, glutamate 398, phenylalanine 438, glutamate 498, lysine 503, lysine 520, and lysine 522. Lysine 331 serves as the catalytic N6-AMP-lysine intermediate. Glutamate 398 is a Mg(2+) binding site. Glutamate 498 lines the Mg(2+) pocket. Residues 691-702 (QEQERKKMEMEN) are compositionally biased toward basic and acidic residues. Residues 691-711 (QEQERKKMEMENRKRKPATKR) form a disordered region. 2 consecutive BRCT domains span residues 742-840 (ASKR…KENK) and 936-1049 (LRSF…EYVA).

The protein belongs to the ATP-dependent DNA ligase family. Mg(2+) is required as a cofactor.

It is found in the nucleus. It carries out the reaction ATP + (deoxyribonucleotide)n-3'-hydroxyl + 5'-phospho-(deoxyribonucleotide)m = (deoxyribonucleotide)n+m + AMP + diphosphate.. Its function is as follows. DNA ligase involved in DNA non-homologous end joining (NHEJ); required for double-strand break (DSB) repair. The polypeptide is DNA ligase 4 (mus-53) (Neurospora crassa (strain ATCC 24698 / 74-OR23-1A / CBS 708.71 / DSM 1257 / FGSC 987)).